Reading from the N-terminus, the 820-residue chain is Leucine-rich repeat and guanylate kinase domain-containing protein (820 aa).

Positions 72-83 are enriched in basic and acidic residues; that stretch reads EAEAEQEEKQQE. Residues 72-96 form a disordered region; that stretch reads EAEAEQEEKQQEDGESEESEESEMQ. A compositionally biased stretch (acidic residues) spans 84–94; the sequence is DGESEESEESE. LRR repeat units lie at residues 129–149, 150–171, 172–193, 194–215, 216–237, 238–259, 260–280, 281–302, and 303–324; these read YLNL…CGYV, HLQK…SCMP, YLLE…KPPQ, NLKK…SAYH, TLTQ…ENCI, SLTH…GTLP, IKVL…EELK, ALQN…ENHD, and LLEV…EYIE. The 39-residue stretch at 337-375 folds into the LRRCT domain; sequence NPIQTKPEYWFFVIYMLLRLTELDQQKIKVEEKVFAVNK. Positions 414 to 597 constitute a Guanylate kinase-like domain; that stretch reads YPMLILTGPA…AYQKLSELIR (184 aa). 421–428 is a binding site for ATP; the sequence is GPAACGKR. Residues 800 to 820 are disordered; sequence TIMDPGSNTKPTLPPIPHGRR. A compositionally biased stretch (pro residues) spans 811-820; it reads TLPPIPHGRR.

In terms of assembly, interacts (via guanylate kinase-like domain) with RIMBP3 (via coiled-coil region). Interacts (via guanylate kinase-like domain) with HOOK2. Interacts (via LRRCT domain) with KLC3. Interacts with HOOK1 and HOOK3. In terms of tissue distribution, highly expressed in the testis. During spermatid development is initially localized to a supra-nuclear region of round spermatids, and is particularly evident at the leading edge of the developing acrosome and acroplaxome. As maturation proceeded and nuclear elongation initiated, LRGUK moves distally to ultimately reside on the microtubules of the manchette. LRGUK is also evident in the sperm basal body and the sperm tail.

The protein resides in the cytoplasmic vesicle. It localises to the secretory vesicle. Its subcellular location is the acrosome. It is found in the cytoplasm. The protein localises to the cytoskeleton. The protein resides in the cilium basal body. Its function is as follows. Involved in multiple aspects of sperm assembly including acrosome attachment, shaping of the sperm head and in the early aspects of axoneme development. Not essential for primary cilium biogenesis. The chain is Leucine-rich repeat and guanylate kinase domain-containing protein (Lrguk) from Mus musculus (Mouse).